The sequence spans 330 residues: Ketol-acid reductoisomerase (NADP(+)) (330 aa).

The region spanning 2–182 is the KARI N-terminal Rossmann domain; the sequence is ARMYYDADAN…GGTRAGILET (181 aa). Residues 25 to 28, Ser51, Ser53, and 83 to 86 contribute to the NADP(+) site; these read YGSQ and DEFQ. The active site involves His108. Gly134 provides a ligand contact to NADP(+). One can recognise a KARI C-terminal knotted domain in the interval 183–328; it reads SFREETETDL…KDLRAMFSWL (146 aa). Mg(2+)-binding residues include Asp191, Glu195, Glu227, and Glu231. Residue Ser252 participates in substrate binding.

It belongs to the ketol-acid reductoisomerase family. Requires Mg(2+) as cofactor.

It carries out the reaction (2R)-2,3-dihydroxy-3-methylbutanoate + NADP(+) = (2S)-2-acetolactate + NADPH + H(+). The enzyme catalyses (2R,3R)-2,3-dihydroxy-3-methylpentanoate + NADP(+) = (S)-2-ethyl-2-hydroxy-3-oxobutanoate + NADPH + H(+). It functions in the pathway amino-acid biosynthesis; L-isoleucine biosynthesis; L-isoleucine from 2-oxobutanoate: step 2/4. Its pathway is amino-acid biosynthesis; L-valine biosynthesis; L-valine from pyruvate: step 2/4. In terms of biological role, involved in the biosynthesis of branched-chain amino acids (BCAA). Catalyzes an alkyl-migration followed by a ketol-acid reduction of (S)-2-acetolactate (S2AL) to yield (R)-2,3-dihydroxy-isovalerate. In the isomerase reaction, S2AL is rearranged via a Mg-dependent methyl migration to produce 3-hydroxy-3-methyl-2-ketobutyrate (HMKB). In the reductase reaction, this 2-ketoacid undergoes a metal-dependent reduction by NADPH to yield (R)-2,3-dihydroxy-isovalerate. The protein is Ketol-acid reductoisomerase (NADP(+)) of Synechococcus sp. (strain ATCC 27144 / PCC 6301 / SAUG 1402/1) (Anacystis nidulans).